Reading from the N-terminus, the 279-residue chain is Large ribosomal subunit protein uL2 (279 aa).

Positions 223–279 are disordered; that stretch reads VVMNPVDHPHGGGEGRTSGGRHPVTPWGKPTKGKRTRSNKKTDSLIMRSRHLAKKKR. Residues 270-279 show a composition bias toward basic residues; it reads RSRHLAKKKR.

The protein belongs to the universal ribosomal protein uL2 family. In terms of assembly, part of the 50S ribosomal subunit. Forms a bridge to the 30S subunit in the 70S ribosome.

Its function is as follows. One of the primary rRNA binding proteins. Required for association of the 30S and 50S subunits to form the 70S ribosome, for tRNA binding and peptide bond formation. It has been suggested to have peptidyltransferase activity; this is somewhat controversial. Makes several contacts with the 16S rRNA in the 70S ribosome. This Rhodospirillum rubrum (strain ATCC 11170 / ATH 1.1.1 / DSM 467 / LMG 4362 / NCIMB 8255 / S1) protein is Large ribosomal subunit protein uL2.